The following is a 168-amino-acid chain: Small ribosomal subunit protein uS9 (168 aa).

Residues 1 to 15 show a composition bias toward acidic residues; the sequence is MAQNEETTEAVEAEE. Residues 1 to 34 form a disordered region; sequence MAQNEETTEAVEAEETLTSYTSESGAAEAAAPKK.

It belongs to the universal ribosomal protein uS9 family.

This is Small ribosomal subunit protein uS9 from Arthrobacter sp. (strain FB24).